The sequence spans 141 residues: UPF0310 protein SSA_0254 (141 aa).

This sequence belongs to the UPF0310 family.

In Streptococcus sanguinis (strain SK36), this protein is UPF0310 protein SSA_0254.